The following is a 490-amino-acid chain: Nuclear distribution protein PAC1 (490 aa).

A coiled-coil region spans residues 65-96 (STVLRLQKKIIDLENEIHNLTNIINTTNSETN). WD repeat units follow at residues 118 to 157 (QCENVVATVRLHPNLPLVFNGCNDGNLYIWNLTNDDNTIP), 163 to 204 (AHTR…RTLN), 205 to 245 (GHEH…CLKS), 251 to 290 (EWCRDLDAVASETQGDFVLTCSNDQSARLSHINSGVGVAM), 293 to 327 (GHTHVVESVKFLPKIQANELIDEYITKNIDQFPSI), 328 to 367 (PSELLKDPIYDELGFKYCVSASRDNTIKLWLIPPPTLIPH), 388 to 427 (GHSSWVKCLSVHPNGKFIISGSDDKTIKFWDLSGLIETGS), and 436 to 487 (GHEG…NSIK).

The protein belongs to the WD repeat LIS1/nudF family. As to quaternary structure, self-associates. Interacts with NDL1 and dynein.

The protein resides in the cytoplasm. Its subcellular location is the cytoskeleton. The protein localises to the spindle pole. Positively regulates the activity of the minus-end directed microtubule motor protein dynein. Plays a central role in positioning the mitotic spindle at the bud neck during cell division. Targets cytoplasmic dynein to microtubule plus ends, thereby promoting dynein-mediated microtubule sliding along the bud cortex and consequently the movement of the mitotic spindle to the bud neck. The polypeptide is Nuclear distribution protein PAC1 (Candida tropicalis (strain ATCC MYA-3404 / T1) (Yeast)).